Here is an 85-residue protein sequence, read N- to C-terminus: Large ribosomal subunit protein bL27 (85 aa).

This sequence belongs to the bacterial ribosomal protein bL27 family.

This is Large ribosomal subunit protein bL27 from Mycobacteroides abscessus (strain ATCC 19977 / DSM 44196 / CCUG 20993 / CIP 104536 / JCM 13569 / NCTC 13031 / TMC 1543 / L948) (Mycobacterium abscessus).